Consider the following 119-residue polypeptide: MKRVAFVFTQGPHGNAGGREGLDALLATSALSEDLGVFFIGDGVLQLLPGQQPEKILARNYIATFGVLPLYDVERCYLCQASLQERGLSQVTDWVLDAEVLAPDALGQLLAGYDAVMTF.

The protein belongs to the DsrF/TusC family. In terms of assembly, heterohexamer, formed by a dimer of trimers. The hexameric TusBCD complex contains 2 copies each of TusB, TusC and TusD. The TusBCD complex interacts with TusE.

Its subcellular location is the cytoplasm. Part of a sulfur-relay system required for 2-thiolation of 5-methylaminomethyl-2-thiouridine (mnm(5)s(2)U) at tRNA wobble positions. The polypeptide is Protein TusC (Serratia proteamaculans (strain 568)).